We begin with the raw amino-acid sequence, 370 residues long: UDP-N-acetylglucosamine--N-acetylmuramyl-(pentapeptide) pyrophosphoryl-undecaprenol N-acetylglucosamine transferase (370 aa).

UDP-N-acetyl-alpha-D-glucosamine contacts are provided by residues 10–12 (TGG), N126, S200, I255, and Q300.

Belongs to the glycosyltransferase 28 family. MurG subfamily.

It localises to the cell membrane. The enzyme catalyses Mur2Ac(oyl-L-Ala-gamma-D-Glu-L-Lys-D-Ala-D-Ala)-di-trans,octa-cis-undecaprenyl diphosphate + UDP-N-acetyl-alpha-D-glucosamine = beta-D-GlcNAc-(1-&gt;4)-Mur2Ac(oyl-L-Ala-gamma-D-Glu-L-Lys-D-Ala-D-Ala)-di-trans,octa-cis-undecaprenyl diphosphate + UDP + H(+). Its pathway is cell wall biogenesis; peptidoglycan biosynthesis. Cell wall formation. Catalyzes the transfer of a GlcNAc subunit on undecaprenyl-pyrophosphoryl-MurNAc-pentapeptide (lipid intermediate I) to form undecaprenyl-pyrophosphoryl-MurNAc-(pentapeptide)GlcNAc (lipid intermediate II). The protein is UDP-N-acetylglucosamine--N-acetylmuramyl-(pentapeptide) pyrophosphoryl-undecaprenol N-acetylglucosamine transferase of Lactobacillus delbrueckii subsp. bulgaricus (strain ATCC 11842 / DSM 20081 / BCRC 10696 / JCM 1002 / NBRC 13953 / NCIMB 11778 / NCTC 12712 / WDCM 00102 / Lb 14).